We begin with the raw amino-acid sequence, 419 residues long: Glutamyl-tRNA reductase (419 aa).

Residues 49–52 (TCNR), Ser107, 112–114 (EPQ), and Gln118 contribute to the substrate site. Cys50 (nucleophile) is an active-site residue. 187-192 (GAGETI) lines the NADP(+) pocket.

This sequence belongs to the glutamyl-tRNA reductase family. In terms of assembly, homodimer.

The catalysed reaction is (S)-4-amino-5-oxopentanoate + tRNA(Glu) + NADP(+) = L-glutamyl-tRNA(Glu) + NADPH + H(+). The protein operates within porphyrin-containing compound metabolism; protoporphyrin-IX biosynthesis; 5-aminolevulinate from L-glutamyl-tRNA(Glu): step 1/2. Its function is as follows. Catalyzes the NADPH-dependent reduction of glutamyl-tRNA(Glu) to glutamate 1-semialdehyde (GSA). The protein is Glutamyl-tRNA reductase of Vibrio atlanticus (strain LGP32) (Vibrio splendidus (strain Mel32)).